The primary structure comprises 237 residues: 7-cyano-7-deazaguanine synthase (237 aa).

9 to 19 is an ATP binding site; it reads YSGGLDSTTCL. Residues Cys189, Cys199, Cys202, and Cys205 each coordinate Zn(2+).

This sequence belongs to the QueC family. The cofactor is Zn(2+).

The enzyme catalyses 7-carboxy-7-deazaguanine + NH4(+) + ATP = 7-cyano-7-deazaguanine + ADP + phosphate + H2O + H(+). The protein operates within purine metabolism; 7-cyano-7-deazaguanine biosynthesis. Its function is as follows. Catalyzes the ATP-dependent conversion of 7-carboxy-7-deazaguanine (CDG) to 7-cyano-7-deazaguanine (preQ(0)). The protein is 7-cyano-7-deazaguanine synthase of Geobacter sulfurreducens (strain ATCC 51573 / DSM 12127 / PCA).